We begin with the raw amino-acid sequence, 125 residues long: U-scoloptoxin(05)-Sm1a (125 aa).

Positions 1-20 (MNVLYTKIFFILILTRTSSA) are cleaved as a signal peptide.

This sequence belongs to the scoloptoxin-05 family. Contains 4 disulfide bonds. As to expression, expressed by the venom gland.

It localises to the secreted. The polypeptide is U-scoloptoxin(05)-Sm1a (Scolopendra morsitans (Tanzanian blue ringleg centipede)).